The sequence spans 266 residues: NAD-capped RNA hydrolase NudC (266 aa).

Arginine 74 serves as a coordination point for substrate. 4 residues coordinate Zn(2+): cysteine 103, cysteine 106, cysteine 121, and cysteine 124. Residue tyrosine 129 coordinates substrate. The region spanning 130 to 253 (PRVSPCIIVA…TIARVLIDET (124 aa)) is the Nudix hydrolase domain. A divalent metal cation is bound by residues alanine 163, glutamate 179, and glutamate 183. A Nudix box motif is present at residues 164-185 (GFVEAGETLEQCVAREVEEETG). 197 to 204 (QPWAFPSN) provides a ligand contact to substrate. Glutamate 224 contacts a divalent metal cation. Alanine 246 contributes to the substrate binding site.

It belongs to the Nudix hydrolase family. NudC subfamily. As to quaternary structure, homodimer. It depends on Mg(2+) as a cofactor. Mn(2+) is required as a cofactor. Zn(2+) serves as cofactor.

The catalysed reaction is a 5'-end NAD(+)-phospho-ribonucleoside in mRNA + H2O = a 5'-end phospho-adenosine-phospho-ribonucleoside in mRNA + beta-nicotinamide D-ribonucleotide + 2 H(+). The enzyme catalyses NAD(+) + H2O = beta-nicotinamide D-ribonucleotide + AMP + 2 H(+). It carries out the reaction NADH + H2O = reduced beta-nicotinamide D-ribonucleotide + AMP + 2 H(+). In terms of biological role, mRNA decapping enzyme that specifically removes the nicotinamide adenine dinucleotide (NAD) cap from a subset of mRNAs by hydrolyzing the diphosphate linkage to produce nicotinamide mononucleotide (NMN) and 5' monophosphate mRNA. The NAD-cap is present at the 5'-end of some mRNAs and stabilizes RNA against 5'-processing. Has preference for mRNAs with a 5'-end purine. Catalyzes the hydrolysis of a broad range of dinucleotide pyrophosphates. This chain is NAD-capped RNA hydrolase NudC, found in Photobacterium profundum (strain SS9).